The sequence spans 533 residues: MSDQATFEFDTDYFVEEFSHCFTGECRVKMLPILYKISQIITGNADLADALSIVLGVMQQHLKMQRGIVTLYDMRAETIFIHDSFGLTEEEKKRGIYAVGEGITGKVVETGKAIVARRLQEHPDFLGRTRVSRNGKAKAAFFCVPIMRAQKVLGTIAAERVYMNPRLLKQDVELLTMIATMIAPLVELYLIENIERVRLENENRRLKHALKERFKPSNIIGNSKPMQEVYELIHKVASTKATVLILGESGVGKELVANAIHYNSPNAEAALVTSNCAPLPENLAESELFGHEKGSFTGALTMHKGCFEQADGGTIFLDEVGELSPTVQAKLVRVLQNRTFERVGGSKPVKVDVRIIAATNRNLVEMVEQGTFREDLYYRLNVFPITVPPLRERGSDVIALADHFVSAFSRENGKNVKRISTPALNMLMSYHWPGNVRELENVMERAVILSDDDVIHSYNLPPSLQTSKESGTAFGLTLEEKIKAVECEMIVEALKNSSGHIGEAAKELGLARRMLGVRMERYGISYKSFSRYA.

Positions I33–N193 are a domain. The 141-residue stretch at D46–V186 folds into the GAF domain. One can recognise a Sigma-54 factor interaction domain in the interval I219–I448. Residues G247 to E254 and A310 to E319 contribute to the ATP site. Residues I501–E520 constitute a DNA-binding region (H-T-H motif).

Functionally, anfA is essential for nitrogen fixation under Mo- and V-deficient conditions. It is required for the regulation of nitrogenase 3 transcription. Interacts with sigma-54. This chain is Nitrogen fixation protein AnfA (anfA), found in Azotobacter vinelandii.